A 1122-amino-acid chain; its full sequence is Angiopoietin-1 receptor (1122 aa).

A signal peptide spans 1–22; that stretch reads MDSLAGLVLCGVSLLLYGVVEG. The Extracellular segment spans residues 23–746; the sequence is AMDLILINSL…SADLGGGKML (724 aa). A disulfide bridge connects residues Cys-44 and Cys-102. Residues 44–123 enclose the Ig-like C2-type 1 domain; the sequence is CIASGWHPHE…RTMKMRQQAS (80 aa). 2 N-linked (GlcNAc...) asparagine glycosylation sites follow: Asn-140 and Asn-158. EGF-like domains follow at residues 210 to 252, 254 to 299, and 301 to 341; these read RCEA…RTCE, ACEP…LQCN, and ACPS…LQCE. Intrachain disulfides connect Cys-211–Cys-220, Cys-224–Cys-233, Cys-227–Cys-240, Cys-242–Cys-251, Cys-255–Cys-264, Cys-268–Cys-274, Cys-280–Cys-287, Cys-289–Cys-298, Cys-302–Cys-311, Cys-315–Cys-323, Cys-317–Cys-329, Cys-331–Cys-340, and Cys-370–Cys-424. In terms of domain architecture, Ig-like C2-type 2 spans 350-440; sequence PQIEDLPDHI…GMVEKPFNIS (91 aa). 7 N-linked (GlcNAc...) asparagine glycosylation sites follow: Asn-399, Asn-438, Asn-464, Asn-558, Asn-595, Asn-648, and Asn-690. Fibronectin type-III domains follow at residues 444 to 539, 543 to 635, and 640 to 733; these read LPEP…TASI, PPRG…TLSD, and QPEN…TLPH. A helical transmembrane segment spans residues 747 to 767; the sequence is LIAILGSAGMTCITVLLAFLI. Residues 768 to 1122 lie on the Cytoplasmic side of the membrane; sequence MLQLKRANVQ…GIDCSAEEAA (355 aa). One can recognise a Protein kinase domain in the interval 822 to 1094; sequence IKFQDVIGEG…QILVSLNRML (273 aa). ATP is bound by residues 828 to 836 and Lys-853; that span reads IGEGNFGQV. Tyr-858 bears the Phosphotyrosine; by autocatalysis mark. The Proton acceptor role is filled by Asp-962. Phosphotyrosine; by autocatalysis is present on residues Tyr-990, Tyr-1100, and Tyr-1106.

Belongs to the protein kinase superfamily. Tyr protein kinase family. Tie subfamily. In terms of assembly, homodimer. Heterodimer with TIE1. Interacts with ANGPT1, ANGPT2 and ANGPT4. At cell-cell contacts in quiescent cells, forms a signaling complex composed of ANGPT1 plus TEK molecules from two adjoining cells. In the absence of endothelial cell-cell contacts, interaction with ANGPT1 mediates contacts with the extracellular matrix. Interacts (tyrosine phosphorylated) with TNIP2. Interacts (tyrosine phosphorylated) with SHC1 (via SH2 domain). Interacts with PTPRB; this promotes endothelial cell-cell adhesion. Interacts with DOK2, GRB2, GRB7, GRB14, PIK3R1 and PTPN11/SHP2. Colocalizes with DOK2 at contacts with the extracellular matrix in migrating cells. Post-translationally, proteolytic processing leads to the shedding of the extracellular domain (soluble TIE-2 alias sTIE-2). In terms of processing, autophosphorylated on tyrosine residues in response to ligand binding. Autophosphorylation occurs in trans, i.e. one subunit of the dimeric receptor phosphorylates tyrosine residues on the other subunit. Autophosphorylation occurs in a sequential manner, where Tyr-990 in the kinase activation loop is phosphorylated first, followed by autophosphorylation at Tyr-1106 and at additional tyrosine residues. ANGPT1-induced phosphorylation is impaired during hypoxia, due to increased expression of ANGPT2. Phosphorylation is important for interaction with GRB14, PIK3R1 and PTPN11. Phosphorylation at Tyr-1100 is important for interaction with GRB2 and GRB7. Phosphorylation at Tyr-1106 is important for interaction with DOK2 and for coupling to downstream signal transduction pathways in endothelial cells. Dephosphorylated by PTPRB. Ubiquitinated. The phosphorylated receptor is ubiquitinated and internalized, leading to its degradation. In terms of tissue distribution, specifically expressed in developing vascular endothelial cells. Abundantly expressed in lung and heart, moderately in brain, liver and kidney, and weakly in thymus, spleen and testis.

Its subcellular location is the cell membrane. It is found in the cell junction. The protein localises to the focal adhesion. The protein resides in the cytoplasm. It localises to the cytoskeleton. Its subcellular location is the secreted. The enzyme catalyses L-tyrosyl-[protein] + ATP = O-phospho-L-tyrosyl-[protein] + ADP + H(+). Its activity is regulated as follows. Angiopoietin binding leads to receptor dimerization and activation by autophosphorylation at Tyr-990 on the kinase activation loop. Functionally, tyrosine-protein kinase that acts as a cell-surface receptor for ANGPT1, ANGPT2 and ANGPT4 and regulates angiogenesis, endothelial cell survival, proliferation, migration, adhesion and cell spreading, reorganization of the actin cytoskeleton, but also maintenance of vascular quiescence. Has anti-inflammatory effects by preventing the leakage of pro-inflammatory plasma proteins and leukocytes from blood vessels. Required for normal angiogenesis and heart development during embryogenesis. Required for postnatal hematopoiesis. After birth, activates or inhibits angiogenesis, depending on the context. Inhibits angiogenesis and promotes vascular stability in quiescent vessels, where endothelial cells have tight contacts. In quiescent vessels, ANGPT1 oligomers recruit TEK to cell-cell contacts, forming complexes with TEK molecules from adjoining cells, and this leads to preferential activation of phosphatidylinositol 3-kinase and the AKT1 signaling cascades. In migrating endothelial cells that lack cell-cell adhesions, ANGT1 recruits TEK to contacts with the extracellular matrix, leading to the formation of focal adhesion complexes, activation of PTK2/FAK and of the downstream kinases MAPK1/ERK2 and MAPK3/ERK1, and ultimately to the stimulation of sprouting angiogenesis. ANGPT1 signaling triggers receptor dimerization and autophosphorylation at specific tyrosine residues that then serve as binding sites for scaffold proteins and effectors. Signaling is modulated by ANGPT2 that has lower affinity for TEK, can promote TEK autophosphorylation in the absence of ANGPT1, but inhibits ANGPT1-mediated signaling by competing for the same binding site. Signaling is also modulated by formation of heterodimers with TIE1, and by proteolytic processing that gives rise to a soluble TEK extracellular domain. The soluble extracellular domain modulates signaling by functioning as decoy receptor for angiopoietins. TEK phosphorylates DOK2, GRB7, GRB14, PIK3R1, SHC1 and TIE1. The chain is Angiopoietin-1 receptor (Tek) from Mus musculus (Mouse).